Consider the following 348-residue polypeptide: Phospho-2-dehydro-3-deoxyheptonate aldolase, Trp-sensitive (348 aa).

This sequence belongs to the class-I DAHP synthase family.

It catalyses the reaction D-erythrose 4-phosphate + phosphoenolpyruvate + H2O = 7-phospho-2-dehydro-3-deoxy-D-arabino-heptonate + phosphate. The protein operates within metabolic intermediate biosynthesis; chorismate biosynthesis; chorismate from D-erythrose 4-phosphate and phosphoenolpyruvate: step 1/7. Its function is as follows. Stereospecific condensation of phosphoenolpyruvate (PEP) and D-erythrose-4-phosphate (E4P) giving rise to 3-deoxy-D-arabino-heptulosonate-7-phosphate (DAHP). In Escherichia coli O6:H1 (strain CFT073 / ATCC 700928 / UPEC), this protein is Phospho-2-dehydro-3-deoxyheptonate aldolase, Trp-sensitive (aroH).